A 730-amino-acid chain; its full sequence is Ribosomal RNA large subunit methyltransferase K/L (730 aa).

The region spanning 46 to 157 (TAYRLCLWSR…RGEAILSLDL (112 aa)) is the THUMP domain.

Belongs to the methyltransferase superfamily. RlmKL family.

It localises to the cytoplasm. The catalysed reaction is guanosine(2445) in 23S rRNA + S-adenosyl-L-methionine = N(2)-methylguanosine(2445) in 23S rRNA + S-adenosyl-L-homocysteine + H(+). It carries out the reaction guanosine(2069) in 23S rRNA + S-adenosyl-L-methionine = N(2)-methylguanosine(2069) in 23S rRNA + S-adenosyl-L-homocysteine + H(+). Its function is as follows. Specifically methylates the guanine in position 2445 (m2G2445) and the guanine in position 2069 (m7G2069) of 23S rRNA. This Pseudomonas putida (strain W619) protein is Ribosomal RNA large subunit methyltransferase K/L.